Here is a 115-residue protein sequence, read N- to C-terminus: MKLLIFAILIALSSSVPQLSEKAEEAVDLAYQEKNNLFDLGSVAGDILSRSGCHVSFGCHKGYCWAGCGDPTNPWSWGENWCYTTKSYSQSYSYVQCTQDSECDGCWKCGGPCSA.

The N-terminal stretch at 1–15 (MKLLIFAILIALSSS) is a signal peptide.

In Thaumetopoea pityocampa (Pine processionary moth), this protein is Allergen Tha p 2.